A 232-amino-acid chain; its full sequence is Purine nucleoside phosphorylase DeoD-type (232 aa).

Residue His4 participates in a purine D-ribonucleoside binding. Phosphate contacts are provided by residues Gly20, Arg24, Arg43, and 87–90 (RIGT). A purine D-ribonucleoside contacts are provided by residues 179 to 181 (EME) and 203 to 204 (SD). Asp204 acts as the Proton donor in catalysis.

This sequence belongs to the PNP/UDP phosphorylase family. As to quaternary structure, homohexamer; trimer of homodimers.

It carries out the reaction a purine D-ribonucleoside + phosphate = a purine nucleobase + alpha-D-ribose 1-phosphate. It catalyses the reaction a purine 2'-deoxy-D-ribonucleoside + phosphate = a purine nucleobase + 2-deoxy-alpha-D-ribose 1-phosphate. Functionally, catalyzes the reversible phosphorolytic breakdown of the N-glycosidic bond in the beta-(deoxy)ribonucleoside molecules, with the formation of the corresponding free purine bases and pentose-1-phosphate. This Caldanaerobacter subterraneus subsp. tengcongensis (strain DSM 15242 / JCM 11007 / NBRC 100824 / MB4) (Thermoanaerobacter tengcongensis) protein is Purine nucleoside phosphorylase DeoD-type.